We begin with the raw amino-acid sequence, 554 residues long: CTP synthase (554 aa).

Residues 1-270 (MTKFVFVTGG…DRIICEELRI (270 aa)) are amidoligase domain. S13 is a binding site for CTP. UTP is bound at residue S13. Residues 14-19 (SLGKGI) and D71 each bind ATP. 2 residues coordinate Mg(2+): D71 and E144. Residues 151 to 153 (DIE), 191 to 196 (KTKPTQ), and K227 contribute to the CTP site. Residues 191–196 (KTKPTQ) and K227 each bind UTP. The Glutamine amidotransferase type-1 domain occupies 295–547 (TIGMVGKYVD…VEAALAHRQR (253 aa)). Residue G356 participates in L-glutamine binding. The active-site Nucleophile; for glutamine hydrolysis is the C383. Residues 384–387 (LGMQ), E407, and R473 each bind L-glutamine. Active-site residues include H520 and E522.

This sequence belongs to the CTP synthase family. Homotetramer.

It carries out the reaction UTP + L-glutamine + ATP + H2O = CTP + L-glutamate + ADP + phosphate + 2 H(+). The enzyme catalyses L-glutamine + H2O = L-glutamate + NH4(+). It catalyses the reaction UTP + NH4(+) + ATP = CTP + ADP + phosphate + 2 H(+). It functions in the pathway pyrimidine metabolism; CTP biosynthesis via de novo pathway; CTP from UDP: step 2/2. With respect to regulation, allosterically activated by GTP, when glutamine is the substrate; GTP has no effect on the reaction when ammonia is the substrate. The allosteric effector GTP functions by stabilizing the protein conformation that binds the tetrahedral intermediate(s) formed during glutamine hydrolysis. Inhibited by the product CTP, via allosteric rather than competitive inhibition. Its function is as follows. Catalyzes the ATP-dependent amination of UTP to CTP with either L-glutamine or ammonia as the source of nitrogen. Regulates intracellular CTP levels through interactions with the four ribonucleotide triphosphates. This chain is CTP synthase, found in Ralstonia nicotianae (strain ATCC BAA-1114 / GMI1000) (Ralstonia solanacearum).